A 442-amino-acid polypeptide reads, in one-letter code: tRNA-2-methylthio-N(6)-dimethylallyladenosine synthase (442 aa).

An MTTase N-terminal domain is found at 3–120 (KKLYIETHGC…LPEMIDAARI (118 aa)). 6 residues coordinate [4Fe-4S] cluster: Cys12, Cys49, Cys83, Cys157, Cys161, and Cys164. Residues 143–375 (RIDGPSAYVS…QHRLNQQGFE (233 aa)) form the Radical SAM core domain. A TRAM domain is found at 378–442 (RQMVGSVQRI…PHSLRGSLIQ (65 aa)).

Belongs to the methylthiotransferase family. MiaB subfamily. Monomer. [4Fe-4S] cluster is required as a cofactor.

Its subcellular location is the cytoplasm. The enzyme catalyses N(6)-dimethylallyladenosine(37) in tRNA + (sulfur carrier)-SH + AH2 + 2 S-adenosyl-L-methionine = 2-methylsulfanyl-N(6)-dimethylallyladenosine(37) in tRNA + (sulfur carrier)-H + 5'-deoxyadenosine + L-methionine + A + S-adenosyl-L-homocysteine + 2 H(+). Functionally, catalyzes the methylthiolation of N6-(dimethylallyl)adenosine (i(6)A), leading to the formation of 2-methylthio-N6-(dimethylallyl)adenosine (ms(2)i(6)A) at position 37 in tRNAs that read codons beginning with uridine. The sequence is that of tRNA-2-methylthio-N(6)-dimethylallyladenosine synthase from Pseudomonas fluorescens (strain Pf0-1).